Reading from the N-terminus, the 337-residue chain is tRNA N6-adenosine threonylcarbamoyltransferase (337 aa).

Residues His111 and His115 each coordinate Fe cation. Substrate contacts are provided by residues 134-138 (LVSGG), Asp167, Gly180, and Asn272. Asp300 contributes to the Fe cation binding site.

This sequence belongs to the KAE1 / TsaD family. It depends on Fe(2+) as a cofactor.

The protein localises to the cytoplasm. The enzyme catalyses L-threonylcarbamoyladenylate + adenosine(37) in tRNA = N(6)-L-threonylcarbamoyladenosine(37) in tRNA + AMP + H(+). Required for the formation of a threonylcarbamoyl group on adenosine at position 37 (t(6)A37) in tRNAs that read codons beginning with adenine. Is involved in the transfer of the threonylcarbamoyl moiety of threonylcarbamoyl-AMP (TC-AMP) to the N6 group of A37, together with TsaE and TsaB. TsaD likely plays a direct catalytic role in this reaction. In Escherichia coli O139:H28 (strain E24377A / ETEC), this protein is tRNA N6-adenosine threonylcarbamoyltransferase.